The following is a 169-amino-acid chain: Der GTPase-activating protein YihI (169 aa).

Disordered stretches follow at residues 1–100 and 144–169; these read MKPS…AELE and GLSY…LRGN. Basic residues predominate over residues 10–19; sequence SKGHAKARRK. Residues 20 to 30 show a composition bias toward basic and acidic residues; the sequence is TREELDQEARD. The span at 31-40 shows a compositional bias: basic residues; the sequence is RKRQKKRRGH. A compositionally biased stretch (polar residues) spans 49-58; sequence GNTSSGSKGQ. The segment covering 147-159 has biased composition (acidic residues); that stretch reads YDDDEEEEEDEKQ. Residues 160–169 show a composition bias toward basic and acidic residues; the sequence is EDMMRLLRGN.

The protein belongs to the YihI family. Interacts with Der.

A GTPase-activating protein (GAP) that modifies Der/EngA GTPase function. May play a role in ribosome biogenesis. In Escherichia coli (strain SMS-3-5 / SECEC), this protein is Der GTPase-activating protein YihI.